A 271-amino-acid polypeptide reads, in one-letter code: Formamidopyrimidine-DNA glycosylase (271 aa).

Catalysis depends on Pro-2, which acts as the Schiff-base intermediate with DNA. Glu-3 (proton donor) is an active-site residue. The active-site Proton donor; for beta-elimination activity is Lys-57. DNA-binding residues include His-90, Arg-109, and Lys-151. The segment at 236–270 (HVYGRGGKTCTQCGHMLSEIKLGQRATVFCSLCQQ) adopts an FPG-type zinc-finger fold. Arg-260 functions as the Proton donor; for delta-elimination activity in the catalytic mechanism.

This sequence belongs to the FPG family. As to quaternary structure, monomer. The cofactor is Zn(2+).

It catalyses the reaction Hydrolysis of DNA containing ring-opened 7-methylguanine residues, releasing 2,6-diamino-4-hydroxy-5-(N-methyl)formamidopyrimidine.. It carries out the reaction 2'-deoxyribonucleotide-(2'-deoxyribose 5'-phosphate)-2'-deoxyribonucleotide-DNA = a 3'-end 2'-deoxyribonucleotide-(2,3-dehydro-2,3-deoxyribose 5'-phosphate)-DNA + a 5'-end 5'-phospho-2'-deoxyribonucleoside-DNA + H(+). Its function is as follows. Involved in base excision repair of DNA damaged by oxidation or by mutagenic agents. Acts as a DNA glycosylase that recognizes and removes damaged bases. Has a preference for oxidized purines, such as 7,8-dihydro-8-oxoguanine (8-oxoG). Has AP (apurinic/apyrimidinic) lyase activity and introduces nicks in the DNA strand. Cleaves the DNA backbone by beta-delta elimination to generate a single-strand break at the site of the removed base with both 3'- and 5'-phosphates. The sequence is that of Formamidopyrimidine-DNA glycosylase from Shewanella pealeana (strain ATCC 700345 / ANG-SQ1).